A 130-amino-acid polypeptide reads, in one-letter code: Hydrogenase maturation factor HypA (130 aa).

Histidine 2 contacts Ni(2+). Cysteine 74, cysteine 77, cysteine 90, and cysteine 93 together coordinate Zn(2+).

The protein belongs to the HypA/HybF family.

Functionally, involved in the maturation of [NiFe] hydrogenases. Required for nickel insertion into the metal center of the hydrogenase. The chain is Hydrogenase maturation factor HypA from Desulfatibacillum aliphaticivorans.